Here is a 541-residue protein sequence, read N- to C-terminus: Protein yellow (541 aa).

Residues 1–21 (MFQDKGWVLVTLIALVTPSWA) form the signal peptide. An N-linked (GlcNAc...) asparagine glycan is attached at asparagine 144.

This sequence belongs to the major royal jelly protein family.

It localises to the secreted. In terms of biological role, controls the pigmentation pattern of the adult cuticle and larval mouth parts. This Drosophila erecta (Fruit fly) protein is Protein yellow (y).